A 459-amino-acid chain; its full sequence is MSFRFNEAVFGDNSFNERVREKLSTALNSPSKKKLDILKSGIKVQKVDFPTIPQLEILDLDIITQPKSLAKGICKISCKDAMLRIQTVIESNLLLISEQDTPSFTMPQLINNGSFTIPITMTFSSIELEAITNIFVKNPGIGISFNDVDLDFKFDCSVKILQSTIERRLKESMHVVFKDVLPSLIFNTSQNWFTNRGESTSTIPGKREHHHQQTTMSRNVILDGSDFQELSPINMLRLSSIVSSRSTLSLHSTVMNSLSAIPGCLERQNLYRFISRMPSLNNYYSSQSFPQPKSSTVSSKQLVKPFYCSHNLLPKTVLDSSQYDLATITKIQSRLFDRSNSNDDNAKPRRRKIKCKKTRTPSNLQSQGEQAVDDSTAIETVTSTPVQTPIPELEEQSPPYLKTTVSIRDKYVIPEKISLNLDSKKDTSKKKPFYFIGLNSQEPSNNWKWGMEDSPPPYH.

The region spanning 1-190 is the SMP-LTD domain; sequence MSFRFNEAVF…LPSLIFNTSQ (190 aa). The span at 338 to 347 shows a compositional bias: basic and acidic residues; that stretch reads RSNSNDDNAK. The disordered stretch occupies residues 338–375; it reads RSNSNDDNAKPRRRKIKCKKTRTPSNLQSQGEQAVDDS. Over residues 348–359 the composition is skewed to basic residues; it reads PRRRKIKCKKTR.

Belongs to the MDM34 family. As to quaternary structure, component of the ER-mitochondria encounter structure (ERMES) or MDM complex, composed of MMM1, MDM10, MDM12 and MDM34. Post-translationally, ubiquitinated by a SCF (SKP1-CUL1-F-box protein) E3 ubiquitin-protein ligase complex containing the F-box protein MDM30. Ubiquitination is important for mitochondrial integrity.

The protein localises to the mitochondrion outer membrane. Its function is as follows. Component of the ERMES/MDM complex, which serves as a molecular tether to connect the endoplasmic reticulum (ER) and mitochondria. Components of this complex are involved in the control of mitochondrial shape and protein biogenesis, and function in nonvesicular lipid trafficking between the ER and mitochondria. MDM34 is required for the interaction of the ER-resident membrane protein MMM1 and the outer mitochondrial membrane-resident beta-barrel protein MDM10. This chain is Mitochondrial distribution and morphology protein 34, found in Saccharomyces cerevisiae (strain RM11-1a) (Baker's yeast).